A 199-amino-acid polypeptide reads, in one-letter code: Holliday junction branch migration complex subunit RuvA (199 aa).

The domain I stretch occupies residues 1–65 (MIGWLHGQII…EDALLLYGFL (65 aa)). The segment at 66 to 144 (DKEERSLFRS…QFDGSVSDTF (79 aa)) is domain II. The flexible linker stretch occupies residues 144 to 148 (FQKQA). The interval 149–199 (GSTHSQQEAISALEALGYKPQEAWKVMNKIDNGNKSCEQLIREALQILSSR) is domain III.

This sequence belongs to the RuvA family. As to quaternary structure, homotetramer. Forms an RuvA(8)-RuvB(12)-Holliday junction (HJ) complex. HJ DNA is sandwiched between 2 RuvA tetramers; dsDNA enters through RuvA and exits via RuvB. An RuvB hexamer assembles on each DNA strand where it exits the tetramer. Each RuvB hexamer is contacted by two RuvA subunits (via domain III) on 2 adjacent RuvB subunits; this complex drives branch migration. In the full resolvosome a probable DNA-RuvA(4)-RuvB(12)-RuvC(2) complex forms which resolves the HJ.

The protein resides in the cytoplasm. In terms of biological role, the RuvA-RuvB-RuvC complex processes Holliday junction (HJ) DNA during genetic recombination and DNA repair, while the RuvA-RuvB complex plays an important role in the rescue of blocked DNA replication forks via replication fork reversal (RFR). RuvA specifically binds to HJ cruciform DNA, conferring on it an open structure. The RuvB hexamer acts as an ATP-dependent pump, pulling dsDNA into and through the RuvAB complex. HJ branch migration allows RuvC to scan DNA until it finds its consensus sequence, where it cleaves and resolves the cruciform DNA. This Legionella pneumophila subsp. pneumophila (strain Philadelphia 1 / ATCC 33152 / DSM 7513) protein is Holliday junction branch migration complex subunit RuvA.